The sequence spans 348 residues: Dihydroorotase (348 aa).

Residues H14 and H16 each coordinate Zn(2+). Residues 16-18 (HLR) and N42 contribute to the substrate site. Zn(2+) contacts are provided by K100, H137, and H175. K100 is subject to N6-carboxylysine. Substrate is bound at residue H137. A substrate-binding site is contributed by L220. D248 is a Zn(2+) binding site. D248 is a catalytic residue. Substrate-binding residues include H252 and A264.

Belongs to the metallo-dependent hydrolases superfamily. DHOase family. Class II DHOase subfamily. In terms of assembly, homodimer. Zn(2+) serves as cofactor.

It carries out the reaction (S)-dihydroorotate + H2O = N-carbamoyl-L-aspartate + H(+). Its pathway is pyrimidine metabolism; UMP biosynthesis via de novo pathway; (S)-dihydroorotate from bicarbonate: step 3/3. Its function is as follows. Catalyzes the reversible cyclization of carbamoyl aspartate to dihydroorotate. This Pseudomonas putida (strain GB-1) protein is Dihydroorotase.